The following is a 276-amino-acid chain: NAD(+)--dinitrogen-reductase ADP-D-ribosyltransferase (276 aa).

Monomer.

It catalyses the reaction L-arginyl-[dinitrogen reductase] + NAD(+) = N(omega)-alpha-(ADP-D-ribosyl)-L-arginyl-[dinitrogen reductase] + nicotinamide + H(+). In terms of biological role, involved in the regulation of the nitrogen fixation activity by the reversible ADP-ribosylation of the dinitrogenase reductase component of the nitrogenase enzyme complex. The ADP-ribosyltransferase (DraT) transfers the ADP-ribose group from NAD to dinitrogenase reductase. The ADP-ribose group is removed through the action of the ADP-ribosylglycohydrolase (DraG). The sequence is that of NAD(+)--dinitrogen-reductase ADP-D-ribosyltransferase (draT) from Rhodospirillum rubrum.